Reading from the N-terminus, the 180-residue chain is NAD(P)H-quinone oxidoreductase subunit I, chloroplastic (180 aa).

4Fe-4S ferredoxin-type domains follow at residues 55–84 and 95–124; these read GRIHFELDKCIACEVCVRVCPIDLPVVDWR and LNYSIDFGICIFCGNCVEYCPTNCLSMTEE. Residues C64, C67, C70, C74, C104, C107, C110, and C114 each contribute to the [4Fe-4S] cluster site.

Belongs to the complex I 23 kDa subunit family. As to quaternary structure, NDH is composed of at least 16 different subunits, 5 of which are encoded in the nucleus. [4Fe-4S] cluster is required as a cofactor.

Its subcellular location is the plastid. The protein resides in the chloroplast thylakoid membrane. The enzyme catalyses a plastoquinone + NADH + (n+1) H(+)(in) = a plastoquinol + NAD(+) + n H(+)(out). It catalyses the reaction a plastoquinone + NADPH + (n+1) H(+)(in) = a plastoquinol + NADP(+) + n H(+)(out). Functionally, NDH shuttles electrons from NAD(P)H:plastoquinone, via FMN and iron-sulfur (Fe-S) centers, to quinones in the photosynthetic chain and possibly in a chloroplast respiratory chain. The immediate electron acceptor for the enzyme in this species is believed to be plastoquinone. Couples the redox reaction to proton translocation, and thus conserves the redox energy in a proton gradient. The polypeptide is NAD(P)H-quinone oxidoreductase subunit I, chloroplastic (Chloranthus spicatus (Chulantree)).